The chain runs to 366 residues: Tetraacyldisaccharide 4'-kinase (366 aa).

62–69 is a binding site for ATP; it reads RVGGTGKT.

Belongs to the LpxK family.

The catalysed reaction is a lipid A disaccharide + ATP = a lipid IVA + ADP + H(+). The protein operates within glycolipid biosynthesis; lipid IV(A) biosynthesis; lipid IV(A) from (3R)-3-hydroxytetradecanoyl-[acyl-carrier-protein] and UDP-N-acetyl-alpha-D-glucosamine: step 6/6. In terms of biological role, transfers the gamma-phosphate of ATP to the 4'-position of a tetraacyldisaccharide 1-phosphate intermediate (termed DS-1-P) to form tetraacyldisaccharide 1,4'-bis-phosphate (lipid IVA). The sequence is that of Tetraacyldisaccharide 4'-kinase from Polynucleobacter necessarius subsp. necessarius (strain STIR1).